Here is a 114-residue protein sequence, read N- to C-terminus: Ig kappa chain V-I region S107A (114 aa).

Positions 1 to 23 (DIVMTQSPTFLAVTASKKVTISC) are framework-1. A disulfide bond links Cys-23 and Cys-94. The interval 24 to 40 (TASESLYSSKHKVHYLA) is complementarity-determining-1. The tract at residues 41–55 (WYQKKPEQSPKLLIY) is framework-2. The segment at 56-62 (GASNRYI) is complementarity-determining-2. The segment at 63-94 (GVPDRFTGSGSGTDFTLTISSVQVEDLTHYYC) is framework-3. Positions 95–103 (AQFYSYPLT) are complementarity-determining-3. Positions 104 to 113 (FGAGTKLELK) are framework-4.

Anti-phosphocholine antibody. This chain is Ig kappa chain V-I region S107A (Igkv7-33), found in Mus musculus (Mouse).